Here is a 364-residue protein sequence, read N- to C-terminus: Putative serine/threonine-protein phosphatase C06A1.3 (364 aa).

The interval 1–24 (MSTDGNNNKKGSKEGPKSSEISKF) is disordered. Residues 11–24 (GSKEGPKSSEISKF) show a composition bias toward basic and acidic residues. Mn(2+)-binding residues include Asp-93, His-95, Asp-121, and Asn-153. His-154 (proton donor) is an active-site residue. Residues His-202 and His-277 each contribute to the Mn(2+) site.

It belongs to the PPP phosphatase family. PP-1 subfamily. Requires Mn(2+) as cofactor.

The catalysed reaction is O-phospho-L-seryl-[protein] + H2O = L-seryl-[protein] + phosphate. It carries out the reaction O-phospho-L-threonyl-[protein] + H2O = L-threonyl-[protein] + phosphate. The protein is Putative serine/threonine-protein phosphatase C06A1.3 of Caenorhabditis elegans.